We begin with the raw amino-acid sequence, 320 residues long: Delta(7)-sterol 5(6)-desaturase erg3C (320 aa).

Transmembrane regions (helical) follow at residues 43 to 63 (VISI…FFSA), 91 to 111 (SSLS…LAEV), and 127 to 147 (PWLV…IYWI). Residues 134-283 (ILYMAFNDIG…FTWADAYFGS (150 aa)) form the Fatty acid hydroxylase domain. The Histidine box-1 motif lies at 148–152 (HRLEH). Residues 161–165 (HKPHH) carry the Histidine box-2 motif. The chain crosses the membrane as a helical span at residues 224 to 244 (YMVLFAAVQIWTILIHDGDMI). Residues 259 to 263 (HTLHH) carry the Histidine box-3 motif.

Belongs to the sterol desaturase family. It depends on Fe cation as a cofactor.

The protein localises to the endoplasmic reticulum membrane. Its function is as follows. Delta(7)-sterol 5(6)-desaturase; part of the third module of ergosterol biosynthesis pathway that includes the late steps of the pathway. Erg3C is a minor delta(7)-sterol 5(6)-desaturase within the ergosterol pathway, erg3B being the major one. The third module or late pathway involves the ergosterol synthesis itself through consecutive reactions that mainly occur in the endoplasmic reticulum (ER) membrane. Firstly, the squalene synthase erg9 catalyzes the condensation of 2 farnesyl pyrophosphate moieties to form squalene, which is the precursor of all steroids. Squalene synthase is crucial for balancing the incorporation of farnesyl diphosphate (FPP) into sterol and nonsterol isoprene synthesis. Secondly, squalene is converted into lanosterol by the consecutive action of the squalene epoxidase erg1 and the lanosterol synthase erg7. Then, the delta(24)-sterol C-methyltransferase erg6 methylates lanosterol at C-24 to produce eburicol. Eburicol is the substrate of the sterol 14-alpha demethylase encoded by cyp51A and cyp51B, to yield 4,4,24-trimethyl ergosta-8,14,24(28)-trienol. The C-14 reductase erg24 then reduces the C14=C15 double bond which leads to 4,4-dimethylfecosterol. A sequence of further demethylations at C-4, involving the C-4 demethylation complex containing the C-4 methylsterol oxidases erg25A or erg25B, the sterol-4-alpha-carboxylate 3-dehydrogenase erg26 and the 3-keto-steroid reductase erg27, leads to the production of fecosterol via 4-methylfecosterol. The C-8 sterol isomerase erg2 then catalyzes the reaction which results in unsaturation at C-7 in the B ring of sterols and thus converts fecosterol to episterol. The sterol-C5-desaturase erg3B then catalyzes the introduction of a C-5 double bond in the B ring to produce 5-dehydroepisterol. The 2 other sterol-C5-desaturases, erg3A and erg3C, seem to be less important in ergosterol biosynthesis. The C-22 sterol desaturase erg5 further converts 5-dehydroepisterol into ergosta-5,7,22,24(28)-tetraen-3beta-ol by forming the C-22(23) double bond in the sterol side chain. Finally, ergosta-5,7,22,24(28)-tetraen-3beta-ol is substrate of the C-24(28) sterol reductases erg4A and erg4B to produce ergosterol. Possible alternative sterol biosynthetic pathways might exist from fecosterol to ergosterol, depending on the activities of the erg3 isoforms. This Aspergillus fumigatus (strain ATCC MYA-4609 / CBS 101355 / FGSC A1100 / Af293) (Neosartorya fumigata) protein is Delta(7)-sterol 5(6)-desaturase erg3C.